Here is a 474-residue protein sequence, read N- to C-terminus: Coiled-coil domain-containing protein 174 (474 aa).

2 disordered regions span residues 39-86 (GVFG…REKL) and 129-170 (GATR…PSEE). 2 stretches are compositionally biased toward basic and acidic residues: residues 64 to 86 (RAEK…REKL) and 129 to 142 (GATR…ERDA). Residues 64–98 (RAEKDAEQKLEEQKTLDKSREKLEEKAKLYEKMTK) adopt a coiled-coil conformation. A compositionally biased stretch (acidic residues) spans 148–157 (NDDDDEEEFS). Serine 206 carries the phosphoserine modification. Residues 276 to 317 (LEMLREQTTDQRIKRENIKEKRKAILEARLAKLRQKKMKKSK) adopt a coiled-coil conformation. 2 disordered regions span residues 309–372 (RQKK…IREW) and 389–461 (ELRA…VTFQ). Basic and acidic residues-rich tracts occupy residues 316-327 (SKVDGTEEESRA) and 356-372 (IQER…IREW). Residues 410–419 (RTGSLSSQPW) show a composition bias toward polar residues. Residues 430 to 453 (GHSSGQSQEPSSSHTSTPASESSP) show a composition bias toward low complexity.

Its subcellular location is the nucleus. Its function is as follows. Probably involved in neuronal development. In Rattus norvegicus (Rat), this protein is Coiled-coil domain-containing protein 174 (Ccdc174).